The following is a 248-amino-acid chain: Mannosylfructose-phosphate phosphatase (248 aa).

It belongs to the sucrose phosphatase family.

The enzyme catalyses beta-D-fructofuranosyl alpha-D-mannopyranoside 6(F)-phosphate + H2O = beta-D-fructofuranosyl alpha-D-mannopyranoside + phosphate. It functions in the pathway carbohydrate metabolism; mannosylfructose biosynthesis; beta-D-fructofuranosyl alpha-D-mannopyranoside from D-fructose 6-phosphate and GDP-alpha-D-mannose: step 2/2. With respect to regulation, inhibited by the phosphatase inhibitors fluoride, molybdate and orthovanadate. The polypeptide is Mannosylfructose-phosphate phosphatase (Agrobacterium fabrum (strain C58 / ATCC 33970) (Agrobacterium tumefaciens (strain C58))).